The following is a 245-amino-acid chain: Phosphoribosylaminoimidazole-succinocarboxamide synthase (245 aa).

The protein belongs to the SAICAR synthetase family.

It carries out the reaction 5-amino-1-(5-phospho-D-ribosyl)imidazole-4-carboxylate + L-aspartate + ATP = (2S)-2-[5-amino-1-(5-phospho-beta-D-ribosyl)imidazole-4-carboxamido]succinate + ADP + phosphate + 2 H(+). The protein operates within purine metabolism; IMP biosynthesis via de novo pathway; 5-amino-1-(5-phospho-D-ribosyl)imidazole-4-carboxamide from 5-amino-1-(5-phospho-D-ribosyl)imidazole-4-carboxylate: step 1/2. The sequence is that of Phosphoribosylaminoimidazole-succinocarboxamide synthase from Nostoc punctiforme (strain ATCC 29133 / PCC 73102).